A 127-amino-acid polypeptide reads, in one-letter code: MEKKIALIAHDKKKDDLVNFVKQNHLFLSKFKLIATGTTGSRIQQATDLTVVKYKSGPMGGDQQIGAEVAEGNVLAIFFFRDPLTSQPHEPDVSALIRLCDVHKIPLATNVKTAEILIKGLESLILR.

In terms of domain architecture, MGS-like spans 1–127; that stretch reads MEKKIALIAH…IKGLESLILR (127 aa). Substrate contacts are provided by residues histidine 10, lysine 14, 36–39, and 56–57; these read TGTT and SG. Aspartate 62 acts as the Proton donor/acceptor in catalysis. Histidine 89 contacts substrate.

Belongs to the methylglyoxal synthase family.

It catalyses the reaction dihydroxyacetone phosphate = methylglyoxal + phosphate. In terms of biological role, catalyzes the formation of methylglyoxal from dihydroxyacetone phosphate. The chain is Methylglyoxal synthase from Borreliella afzelii (strain PKo) (Borrelia afzelii).